The following is a 326-amino-acid chain: Ankyrin repeat domain-containing protein 9 (326 aa).

The disordered stretch occupies residues 1–20 (MPWDTRPGRSANGGPEGPGA). An ANK 1 repeat occupies 70 to 99 (SPSEALLYALVHDHQAYAHYLLATFPRCAL). The short motif at 108 to 109 (CC) is the Important role in both nutrient sensing and binding/regulation of IMPDH2 element. 2 ANK repeats span residues 111–140 (APGP…DFPV) and 157–186 (GGGT…SPGL).

Part of an E3 ubiquitin-protein ligase complex with Elongin BC (ELOB and ELOC), CUL5 and ANKRD9. Interacts with IMPDH2; leading to ubiquitination of IMPDH2 and its subsequent proteasomal degradation.

It is found in the cytoplasmic vesicle. The protein resides in the cytoplasm. It localises to the cytosol. The protein operates within protein modification; protein ubiquitination. Functionally, substrate receptor subunit of a cullin-RING superfamily E3 ligase complex (CUL5-based E3 ubiquitin ligase complex) which mediates the ubiquitination and subsequent proteasomal degradation of target proteins. Depending of the metabolic state of the cell, promotes the proteasomal degradation of IMPDH2, the rate-limiting enzyme in GTP biosynthesis or protects IMPDH2 by stabilizing IMPDH2 filaments assembly. Implicated in different cellular processes, like copper homeostasis and cell proliferation. The polypeptide is Ankyrin repeat domain-containing protein 9 (Ankrd9) (Mus musculus (Mouse)).